A 504-amino-acid polypeptide reads, in one-letter code: Glucose-6-phosphate isomerase (504 aa).

Catalysis depends on Glu333, which acts as the Proton donor. Active-site residues include His364 and Lys473.

This sequence belongs to the GPI family.

Its subcellular location is the cytoplasm. It catalyses the reaction alpha-D-glucose 6-phosphate = beta-D-fructose 6-phosphate. Its pathway is carbohydrate biosynthesis; gluconeogenesis. It functions in the pathway carbohydrate degradation; glycolysis; D-glyceraldehyde 3-phosphate and glycerone phosphate from D-glucose: step 2/4. Catalyzes the reversible isomerization of glucose-6-phosphate to fructose-6-phosphate. The chain is Glucose-6-phosphate isomerase from Xanthomonas campestris pv. campestris (strain B100).